The following is a 503-amino-acid chain: NAD-dependent protein deacetylase HST1 (503 aa).

One can recognise a Deacetylase sirtuin-type domain in the interval 183-468; that stretch reads RLPNFNTIDH…SLVAKKCHWD (286 aa). NAD(+) is bound by residues 208 to 227 and 290 to 293; these read GAGV…EGFY and QNID. His310 acts as the Proton acceptor in catalysis. Residues Cys318, Cys321, Cys342, and Cys345 each contribute to the Zn(2+) site. Residues 412 to 414, 437 to 439, and Cys454 each bind NAD(+); these read GTS and NRD.

The protein belongs to the sirtuin family. Class I subfamily. In terms of assembly, identified in the Set3C complex with HOS2, SIF2, SNT1, CPR1, HOS4/YIL112W and SET3. Its presence is however not essential for meiotic repression by the Set3C complex. Interacts with SUM1 and RFM1. The interaction with SUM1 is mediated by RFM1. Zn(2+) is required as a cofactor.

It localises to the nucleus. The enzyme catalyses N(6)-acetyl-L-lysyl-[protein] + NAD(+) + H2O = 2''-O-acetyl-ADP-D-ribose + nicotinamide + L-lysyl-[protein]. NAD-dependent histone deacetylase involved in telomeric silencing. Histone deacetylase proteins act via the formation of large multiprotein complexes that are responsible for the deacetylation of lysine residues on the N-terminal part of the core histones (H2A, H2B, H3 and H4). Histone deacetylation gives a tag for epigenetic repression and plays an important role in transcriptional regulation, cell cycle progression and developmental events. Restores silencing at HMR in SIR2 mutants when overexpressed. Required to repress middle sporulation genes during vegetative growth. Acts as a sensor of NAD(+) levels and regulator of NAD(+) biosynthesis. Regulates the gene expression of de novo NAD(+) biosynthesis genes. This Saccharomyces cerevisiae (strain ATCC 204508 / S288c) (Baker's yeast) protein is NAD-dependent protein deacetylase HST1 (HST1).